Reading from the N-terminus, the 201-residue chain is Recombination protein RecR (201 aa).

The segment at Cys-59 to Cys-74 adopts a C4-type zinc-finger fold. The Toprim domain maps to Ser-82 to Pro-177.

It belongs to the RecR family.

Its function is as follows. May play a role in DNA repair. It seems to be involved in an RecBC-independent recombinational process of DNA repair. It may act with RecF and RecO. The chain is Recombination protein RecR from Rickettsia africae (strain ESF-5).